The primary structure comprises 639 residues: UvrABC system protein C (639 aa).

A GIY-YIG domain is found at 20-97; that stretch reads ERSGVYRMFD…IKKFQPKFNI (78 aa). The region spanning 207 to 242 is the UVR domain; it reads KELQENLSRKMEELSSQMRFEEAAEIRDRIKALSYV.

It belongs to the UvrC family. As to quaternary structure, interacts with UvrB in an incision complex.

It localises to the cytoplasm. Its function is as follows. The UvrABC repair system catalyzes the recognition and processing of DNA lesions. UvrC both incises the 5' and 3' sides of the lesion. The N-terminal half is responsible for the 3' incision and the C-terminal half is responsible for the 5' incision. This is UvrABC system protein C from Rickettsia peacockii (strain Rustic).